We begin with the raw amino-acid sequence, 502 residues long: uncharacterized protein (502 aa).

Residues Met1–Tyr21 traverse the membrane as a helical segment. PLD phosphodiesterase domains are found at residues Ile162 to Tyr189 and Thr396 to Ser423.

It belongs to the phospholipase D family. Cardiolipin synthase subfamily.

The protein resides in the cell membrane. This is an uncharacterized protein from Helicobacter pylori (strain ATCC 700392 / 26695) (Campylobacter pylori).